Consider the following 218-residue polypeptide: Putative copper transporter crmD (218 aa).

A run of 2 helical transmembrane segments spans residues 37 to 57 (YSLT…LGVL) and 176 to 196 (MLAV…GIVV).

It belongs to the copper transporter (Ctr) (TC 1.A.56) family. SLC31A subfamily.

Its subcellular location is the membrane. It catalyses the reaction Cu(2+)(in) = Cu(2+)(out). Functionally, putative copper transporter; part of the crm gene cluster that mediates the biosynthesis of a yet unidentified copper-responsive metabolite. Probably involved in the transport of copper, even if it does not act as a major copper transporter. In contrast to crmA, is not involved in the biosynthesis of fumivalines or fumicicolins. This chain is Putative copper transporter crmD, found in Aspergillus fumigatus (strain ATCC MYA-4609 / CBS 101355 / FGSC A1100 / Af293) (Neosartorya fumigata).